The chain runs to 847 residues: MMSGVMLLMLAIFLIIAFTLMYLAIYFEFDETTFTKRLQVMTEYVKRTNADEPTPDVIGYVSDIMQNTYIVTWFNTVDLSTYHESVHDDRIEIFDFLNQKFQPVDRIVHDRVRANDENPNEFILSGDKADVTMKCPAYFNFDYAQLKCVPVPPCDNKSAGLYPMDERLLDTLVLNQHLDKDYSTNAHLYHPTFYLRCFANGAHAVEECPDNYTFDAETGQCKVNELCENRPDGYILSYFPSNLLVNQFMQCVNGRHVVGECPANKIFDRNLMSCVEAHPCAFNGAGHTYITADIGDTQYFKCLNNNESQLITCINRIRNSDNQYECSGDSRCIDLPNGTGQHVFKHVDDDISYNSGQLVCDNFEVISDIECDQSNVFENALFMDKFRLNMQFPTEVFDGTACVPATADNVNFLRSTFAIENIPNHYGIDMQTSMLGTTEMVKQLVSKDLSLNNDAIFAQWLLYARDKDAIGLNPFTGEPIDCFGDNLYDVFDARRANICNDSGTSVLKTLNFGDGEFLNVLSSTLTGKDEDYRQFCAISYENGQKIVENEHFQRRILTNILQSDVCADLYTTLYQKYTTLNSKYTTTPLQYNHTLVKRPKNIEIYGANTRLKNATIPKNAATIPPVFNPFENQPNNRQNDSILPLFNPFQTTDAVWYSEPGGDDDHWVVAPPTAPPPPPEPEPEPEPEPEPEPELPSPLILDNKDLFYSCHYSVPFFKLTSCHAENDVIIDALNELRNNVKVDADCELAKDLSHVLNAYAYVGNGIGCRSAYDGDAIVVKKEAVPSHVYANLNTQSNDGVKYNRWLHVKNGQYMACPEELYDNNEFKCNIESDKLYYLDNLQEDSIV.

The N-terminal stretch at 1–19 (MMSGVMLLMLAIFLIIAFT) is a signal peptide. The C2HC BV-type zinc-finger motif lies at 148–197 (CVPVPPCDNKSAGLYPMDERLLDTLVLNQHLDKDYSTNAHLYHPTFYLRC). 2 N-linked (GlcNAc...) asparagine; by host glycosylation sites follow: Asn-156 and Asn-211. Disulfide bonds link Cys-208–Cys-221 and Cys-261–Cys-274. In terms of domain architecture, Chitin-binding type-2 spans 224–282 (NELCENRPDGYILSYFPSNLLVNQFMQCVNGRHVVGECPANKIFDRNLMSCVEAHPCAF). Residues Asn-306, Asn-337, Asn-500, Asn-592, Asn-613, and Asn-639 are each glycosylated (N-linked (GlcNAc...) asparagine; by host). The disordered stretch occupies residues 665 to 698 (DHWVVAPPTAPPPPPEPEPEPEPEPEPEPELPSP). Over residues 681-693 (PEPEPEPEPEPEP) the composition is skewed to acidic residues.

It localises to the virion. Its function is as follows. Plays an essential role in nucleocapsid assembly. Essential for the establishment of efficient per os infection. In Autographa californica nuclear polyhedrosis virus (AcMNPV), this protein is Capsid-associated protein AC83 (p95).